The sequence spans 292 residues: Phosphoribosylglycinamide formyltransferase, chloroplastic (292 aa).

A chloroplast-targeting transit peptide spans 1–65 (MESRVLFSSQ…KAASSTPQIV (65 aa)). 88 to 90 (GSN) is a binding site for N(1)-(5-phospho-beta-D-ribosyl)glycinamide. (6R)-10-formyltetrahydrofolate contacts are provided by residues 167-170 (LKLI) and N184. Catalysis depends on H186, which acts as the Proton donor. A (6R)-10-formyltetrahydrofolate-binding site is contributed by D227. E256 provides a ligand contact to N(1)-(5-phospho-beta-D-ribosyl)glycinamide.

The protein belongs to the GART family.

The protein localises to the plastid. It localises to the chloroplast. It catalyses the reaction N(1)-(5-phospho-beta-D-ribosyl)glycinamide + (6R)-10-formyltetrahydrofolate = N(2)-formyl-N(1)-(5-phospho-beta-D-ribosyl)glycinamide + (6S)-5,6,7,8-tetrahydrofolate + H(+). Its pathway is purine metabolism; IMP biosynthesis via de novo pathway; N(2)-formyl-N(1)-(5-phospho-D-ribosyl)glycinamide from N(1)-(5-phospho-D-ribosyl)glycinamide (10-formyl THF route): step 1/1. The polypeptide is Phosphoribosylglycinamide formyltransferase, chloroplastic (PUR3) (Arabidopsis thaliana (Mouse-ear cress)).